Here is a 261-residue protein sequence, read N- to C-terminus: Ribosomal RNA small subunit methyltransferase J (261 aa).

Residues R109–D110, E125–R126, and D179 contribute to the S-adenosyl-L-methionine site.

Belongs to the methyltransferase superfamily. RsmJ family.

The protein localises to the cytoplasm. The enzyme catalyses guanosine(1516) in 16S rRNA + S-adenosyl-L-methionine = N(2)-methylguanosine(1516) in 16S rRNA + S-adenosyl-L-homocysteine + H(+). Functionally, specifically methylates the guanosine in position 1516 of 16S rRNA. This chain is Ribosomal RNA small subunit methyltransferase J, found in Pseudomonas aeruginosa (strain LESB58).